Here is a 968-residue protein sequence, read N- to C-terminus: MKDTSSKRPKSKEANKKKTKDKSNADNLPKPEEAAASEPGHPEYIFPLVLTSVSQELFGCRADEDVTAENPHKLLKKQDIIQDLRHRAAVCDFSPVKQAVLDYPEDELLLVFDRDFIYGQSFYLVLTVQAKESILKPPAEGADEQMEDEEQQEEEEEMMTKTPEPQPWVSLGSERLVYTPSAVLSSVICVRQLRYSVCPLGRRSGTRVRFSDRNALDWKEELVECSSYEDKSFSITRMERDSSTQTCRDNTHTCTQTLWKKPKNMWSQYEPREFSSEEKQHQLQSENLKNFITSVARRFEIYLQQNLIADVFCDDWTALCEDDASLMGKTETQLKEYQSFMDLHFSKEKTISHVQWHPSISGVIVVSMMERLSLEERIDSSTKLLLNPSHILFWSFSDPINPQLQLECPDDVLCFQFSPSDHNIIAGGCMNGQVVLWDISAHVDRLQDTRSGGKNILNKLGKSDATPVVRYCAVSGIENGHKAPITDIQWLPETFEVNKLGTPVENQSRTSVQLVTCAPDCCVLFWDLRAPRVMVHSLTDIKQKQEEKPLENPHGVPNTFTHLNLTWKPFIRVSLPKISSSGEYSPLRFSMRENTVDYNTGDKSVSGADSRVFAQLRMQSAKQQKPLQNISTKLYIATEDGELVYTDWKVEKDNDSGRMLSAKPLDVFLLQDTLLHTVSRSPFFRDIILTVGRFSFSIWREGLTCGPLLMSVYSKSMFSAGHWSRSRPAVLFMGREDGDVEVWDLLQNSRQPSHTQNISTAAISCIRTQTSSGNTHPYTETLHTHTHTQPPSAAYAHRPAPVTHTHTHKHCTHTHTHTHTHTHTHSRHQLHTHTDQLRVLEERVREAKQNLLAVSDRLGTLHILQIPGSLRRSSSSERQNVEKYFEKEEERLQYFEKRQSDHQKKKKETEAEQQKKKTELVTPPKQEEEVNAETLKEYQQFLTLEKLILKDMNIQNETQQTCNTINTP.

A compositionally biased stretch (basic and acidic residues) spans 1–33; it reads MKDTSSKRPKSKEANKKKTKDKSNADNLPKPEE. Disordered regions lie at residues 1–39 and 136–166; these read MKDTSSKRPKSKEANKKKTKDKSNADNLPKPEEAAASEP and KPPAEGADEQMEDEEQQEEEEEMMTKTPEPQ. A compositionally biased stretch (acidic residues) spans 141–157; it reads GADEQMEDEEQQEEEEE. 3 WD repeats span residues 407-447, 480-536, and 712-753; these read ECPD…DRLQ, GHKA…VMVH, and VYSK…RQPS. Positions 830 to 857 form a coiled coil; that stretch reads LHTHTDQLRVLEERVREAKQNLLAVSDR. Residues 897-919 are compositionally biased toward basic and acidic residues; sequence KRQSDHQKKKKETEAEQQKKKTE. The tract at residues 897-930 is disordered; sequence KRQSDHQKKKKETEAEQQKKKTELVTPPKQEEEV.

As to quaternary structure, part of the multisubunit axonemal dynein complex formed at least of two heavy chains and a number of intermediate and light chains.

The protein resides in the cytoplasm. Functionally, may be involved in the regulation of cilia function. The chain is Dynein axonemal intermediate chain 3 (dnai3) from Danio rerio (Zebrafish).